A 124-amino-acid chain; its full sequence is Small ribosomal subunit protein uS12 (124 aa).

Residues 1-24 form a disordered region; it reads MPTINQLVRRPRKPSVSANKAPAL. Asp-90 carries the post-translational modification 3-methylthioaspartic acid.

It belongs to the universal ribosomal protein uS12 family. In terms of assembly, part of the 30S ribosomal subunit. Contacts proteins S8 and S17. May interact with IF1 in the 30S initiation complex.

In terms of biological role, with S4 and S5 plays an important role in translational accuracy. Functionally, interacts with and stabilizes bases of the 16S rRNA that are involved in tRNA selection in the A site and with the mRNA backbone. Located at the interface of the 30S and 50S subunits, it traverses the body of the 30S subunit contacting proteins on the other side and probably holding the rRNA structure together. The combined cluster of proteins S8, S12 and S17 appears to hold together the shoulder and platform of the 30S subunit. This chain is Small ribosomal subunit protein uS12, found in Anaplasma phagocytophilum (strain HZ).